A 409-amino-acid chain; its full sequence is Elongation factor Tu (409 aa).

The 205-residue stretch at 10–214 (KPHVNIGTIG…AVDSYIPTPE (205 aa)) folds into the tr-type G domain. The tract at residues 19–26 (GHVDHGKT) is G1. 19–26 (GHVDHGKT) is a GTP binding site. Thr26 contributes to the Mg(2+) binding site. The segment at 60–64 (GITIN) is G2. The segment at 81 to 84 (DCPG) is G3. GTP-binding positions include 81 to 85 (DCPGH) and 136 to 139 (NKVD). The tract at residues 136-139 (NKVD) is G4. Positions 174–176 (SGL) are G5.

Belongs to the TRAFAC class translation factor GTPase superfamily. Classic translation factor GTPase family. EF-Tu/EF-1A subfamily. As to quaternary structure, monomer.

It localises to the cytoplasm. It catalyses the reaction GTP + H2O = GDP + phosphate + H(+). In terms of biological role, GTP hydrolase that promotes the GTP-dependent binding of aminoacyl-tRNA to the A-site of ribosomes during protein biosynthesis. The chain is Elongation factor Tu from Cyanothece sp. (strain PCC 7425 / ATCC 29141).